Reading from the N-terminus, the 530-residue chain is Arginine-containing cyclodipeptide synthase pthA (530 aa).

Positions 419–423 match the Conserved DDXXE motif motif; the sequence is DDRAE.

The protein belongs to the arginine-containing cyclodipeptide synthase family.

It catalyses the reaction L-aspartyl-tRNA(Asp) + L-arginyl-tRNA(Arg) = cyclo(L-arginyl-L-aspartyl) + tRNA(Asp) + tRNA(Arg) + 2 H(+). Its pathway is secondary metabolite biosynthesis. In terms of biological role, arginine-containing cyclodipeptide synthase; part of the cluster that mediates the biosynthesis of a highly modified cyclo-arginine-aspartate dipeptide (cRD). Within the pathway, pthA acts as the scaffold-generating enzyme and is responsible for formation of the cyclo-Arg-Asp diketopiperazine (cRW) from L-arginyl-tRNA(Arg) + L-aspartyl-tRNA(Asp). Additional enzymes from the cluster then further modify the cyclo-Arg-Asp diketopiperazine (cRW) scaffold. This Penicillium thymicola protein is Arginine-containing cyclodipeptide synthase pthA.